The chain runs to 63 residues: Large ribosomal subunit protein uL29 (63 aa).

This sequence belongs to the universal ribosomal protein uL29 family.

This chain is Large ribosomal subunit protein uL29, found in Erwinia tasmaniensis (strain DSM 17950 / CFBP 7177 / CIP 109463 / NCPPB 4357 / Et1/99).